The primary structure comprises 392 residues: MVFSKDLPSPATMFSTYASLAGYIMMIKPMIHTIIPRPIQNFVFSYIKSFVGSPQAYLSSKISPDASKLRMTRDPNNKNVNLHLSQGEVVSDVYKGIELKWRYLEGRNKKTTVVGEETEEAIVNWQCFELSFDKKHKDLVVKSYIAYVERKAKVIKEERRIIKMHSYSSYTLRWQSVKFEHPSTFHTMAMTPKLKSSVMEDLDRFIKRKDYYKRVGKAWKRSYFLYGPPGTGKSSLVAAMANYLKFDIYDLQLANVQGDAQLRSLLLATNNSSILLVEDIDCSVDLPTRLQPATTTLGAPKGSTPLTLSGLLNCIDGLWSSCGDERIVIFTTNNKEVLDPALLRPGCMDMHIYLGHCSFEGFKILASNYLGMPHDSDDPHRLYPDIKRLIDG.

Residues 13–35 (MFSTYASLAGYIMMIKPMIHTII) traverse the membrane as a helical segment. 227-234 (GPPGTGKS) contributes to the ATP binding site.

The protein belongs to the AAA ATPase family. BCS1 subfamily. It depends on Mg(2+) as a cofactor.

It is found in the membrane. The enzyme catalyses ATP + H2O = ADP + phosphate + H(+). The protein is AAA-ATPase At5g17750 of Arabidopsis thaliana (Mouse-ear cress).